The sequence spans 274 residues: 2,3,4,5-tetrahydropyridine-2,6-dicarboxylate N-succinyltransferase (274 aa).

Residues arginine 106 and aspartate 143 each coordinate substrate.

It belongs to the transferase hexapeptide repeat family. As to quaternary structure, homotrimer.

The protein localises to the cytoplasm. The enzyme catalyses (S)-2,3,4,5-tetrahydrodipicolinate + succinyl-CoA + H2O = (S)-2-succinylamino-6-oxoheptanedioate + CoA. The protein operates within amino-acid biosynthesis; L-lysine biosynthesis via DAP pathway; LL-2,6-diaminopimelate from (S)-tetrahydrodipicolinate (succinylase route): step 1/3. The sequence is that of 2,3,4,5-tetrahydropyridine-2,6-dicarboxylate N-succinyltransferase from Acidovorax ebreus (strain TPSY) (Diaphorobacter sp. (strain TPSY)).